Reading from the N-terminus, the 103-residue chain is MSNQRIRIRLKAFDHRLIDQSTAEIVETAKRTGAQVRGPIPLPTRFERFTVLTSPHVNKDARDQYEIRTHKRLIDIVEPTDKTVDALMRLDLAAGVDVQISLG.

It belongs to the universal ribosomal protein uS10 family. As to quaternary structure, part of the 30S ribosomal subunit.

Functionally, involved in the binding of tRNA to the ribosomes. The polypeptide is Small ribosomal subunit protein uS10 (Pseudoalteromonas translucida (strain TAC 125)).